The primary structure comprises 580 residues: Zinc finger protein 271 (580 aa).

C2H2-type zinc fingers lie at residues 78-100, 104-126, 132-154, 160-182, 188-210, 216-238, 244-266, 272-294, 300-322, 328-350, 356-378, 384-406, 412-434, 440-462, 468-490, 496-518, 524-545, and 551-573; these read YNCDECDQSFAWSTGLIRHQRTH, YECEECGKAFRMSSALVLHQRIH, YPCSWCIKSFSRSSDLIKHQRVH, YKCDECGKAFSQSSDLMIHQRIH, YQCSHCSKSFSQHSGMVKHLRIH, YMCNHCYKHFSQSSDLIKHQRIH, YKCDVCGKAFSQSSDRILHQRIH, YPCAQCNKSFSQNSDLIKHRRIH, YKCSECGKAFNQSSVLILHQRIH, YPCNQCTKSFSRLSDLINHQRIH, YPCSQCSKMFSRRSDLVKHYRIH, YECDKCGKTFSQSSNLILHQRIH, YPCNSCSKSFSRGSDLIKHQRVH, YTCNLCSKSFSQSSDLTKHQRVH, YHCSSCNKAFRQSSDLILHHRVH, YACTQCPRSFSQKSDLIKHQRIH, YKCMCGKAFSQCSAFTLHQRIH, and YPCAQCGKSFSQRSDLVNHQRVH.

The protein belongs to the krueppel C2H2-type zinc-finger protein family. As to expression, selectively expressed in adult testis.

The protein resides in the nucleus. May act to control gene activity during the pachytene stage of meiotic prophase. May function as a transcription activator. This is Zinc finger protein 271 (Znf271) from Mus musculus (Mouse).